The following is a 210-amino-acid chain: 3-hexulose-6-phosphate synthase (210 aa).

This sequence belongs to the HPS/KGPDC family. HPS subfamily.

The catalysed reaction is D-ribulose 5-phosphate + formaldehyde = D-arabino-hex-3-ulose 6-phosphate. It participates in one-carbon metabolism; formaldehyde assimilation via RuMP pathway; D-fructose 6-phosphate from D-ribulose 5-phosphate and formaldehyde: step 1/2. Functionally, catalyzes the condensation of ribulose 5-phosphate with formaldehyde to form 3-hexulose 6-phosphate. In Staphylococcus epidermidis (strain ATCC 35984 / DSM 28319 / BCRC 17069 / CCUG 31568 / BM 3577 / RP62A), this protein is 3-hexulose-6-phosphate synthase.